The chain runs to 151 residues: UPF0251 protein Ctha_0452 (151 aa).

Belongs to the UPF0251 family.

This Chloroherpeton thalassium (strain ATCC 35110 / GB-78) protein is UPF0251 protein Ctha_0452.